Here is a 99-residue protein sequence, read N- to C-terminus: Large ribosomal subunit protein uL23 (99 aa).

Belongs to the universal ribosomal protein uL23 family. Part of the 50S ribosomal subunit. Contacts protein L29, and trigger factor when it is bound to the ribosome.

One of the early assembly proteins it binds 23S rRNA. One of the proteins that surrounds the polypeptide exit tunnel on the outside of the ribosome. Forms the main docking site for trigger factor binding to the ribosome. The sequence is that of Large ribosomal subunit protein uL23 from Xanthomonas axonopodis pv. citri (strain 306).